A 303-amino-acid chain; its full sequence is MSNIVSPFSGSSRTTSDVGKQAGGTSDEKLIESLFSEKAVKEIAAECKLGCYNYLKSNEPRNYIDLVPKSHVSAWLSWATSKYDKGELPSRGFMNVPRIVCFLVRTTDSAESGSITVSLCDSGKAARAGVLEAIDNQEATIQLSALPALIALTPSYDCPMEVIGGDSGRNRCFGIATQLSGVVGTTGSVAVTHAYWQANFKAKPNNYKLHGPATIMVMPFDRLRQLDKKSLKNYIRGISNQSVDHGYLLGRPLQSVDQVAQEDLLVEESESPSALGRGVKDSKSVSASSVAGLPVSSPTLRIK.

Over residues 1–18 (MSNIVSPFSGSSRTTSDV) the composition is skewed to polar residues. Disordered regions lie at residues 1 to 24 (MSNIVSPFSGSSRTTSDVGKQAGG) and 267 to 303 (EESESPSALGRGVKDSKSVSASSVAGLPVSSPTLRIK).

It belongs to the bromovirus movement protein family. Phosphorylated by host.

Its subcellular location is the host cell junction. It is found in the host plasmodesma. Transports viral genome to neighboring plant cells directly through plasmosdesmata, without any budding. The movement protein allows efficient cell to cell propagation, by bypassing the host cell wall barrier. Acts by forming a tubular structure at the host plasmodesmata, enlarging it enough to allow free passage of virion capsids. The chain is Movement protein from Brome mosaic virus (BMV).